The sequence spans 324 residues: NADH-ubiquinone oxidoreductase chain 1 (324 aa).

8 helical membrane-spanning segments follow: residues L9–I29, F75–M95, L106–G126, I146–Y166, S177–A197, L228–F248, E259–V279, and F299–G319.

The protein belongs to the complex I subunit 1 family.

The protein resides in the mitochondrion inner membrane. The catalysed reaction is a ubiquinone + NADH + 5 H(+)(in) = a ubiquinol + NAD(+) + 4 H(+)(out). In terms of biological role, core subunit of the mitochondrial membrane respiratory chain NADH dehydrogenase (Complex I) that is believed to belong to the minimal assembly required for catalysis. Complex I functions in the transfer of electrons from NADH to the respiratory chain. The immediate electron acceptor for the enzyme is believed to be ubiquinone. In Cyprinus carpio (Common carp), this protein is NADH-ubiquinone oxidoreductase chain 1 (MT-ND1).